The following is a 143-amino-acid chain: MALSLDILMSVTMVTAVLTTVNAEYKDSRLDSRQLPANFPMCQHRQLCAVASRATNNLRVYCRCSDDTICPISDDHHAIYPNTAYICQHVNSYLDPCVDITIPAIVTTSEIYVINCRCDTYQWPPVGGKVYCESLSSRMFKLF.

Positions 1-23 are cleaved as a signal peptide; that stretch reads MALSLDILMSVTMVTAVLTTVNA. A propeptide spanning residues 24–32 is cleaved from the precursor; that stretch reads EYKDSRLDS.

Contains 4 disulfide bonds. Expressed by the venom duct.

Its subcellular location is the secreted. This chain is Turripeptide VIII-01, found in Gemmula speciosa (Splendid gem-turris).